We begin with the raw amino-acid sequence, 428 residues long: Serine--tRNA ligase (428 aa).

Position 231-233 (Thr231–Glu233) interacts with L-serine. Residue Arg262–Glu264 participates in ATP binding. An L-serine-binding site is contributed by Glu285. Glu349 to Ser352 contributes to the ATP binding site. Position 385 (Ser385) interacts with L-serine.

The protein belongs to the class-II aminoacyl-tRNA synthetase family. Type-1 seryl-tRNA synthetase subfamily. As to quaternary structure, homodimer. The tRNA molecule binds across the dimer.

Its subcellular location is the cytoplasm. It catalyses the reaction tRNA(Ser) + L-serine + ATP = L-seryl-tRNA(Ser) + AMP + diphosphate + H(+). The enzyme catalyses tRNA(Sec) + L-serine + ATP = L-seryl-tRNA(Sec) + AMP + diphosphate + H(+). It participates in aminoacyl-tRNA biosynthesis; selenocysteinyl-tRNA(Sec) biosynthesis; L-seryl-tRNA(Sec) from L-serine and tRNA(Sec): step 1/1. In terms of biological role, catalyzes the attachment of serine to tRNA(Ser). Is also able to aminoacylate tRNA(Sec) with serine, to form the misacylated tRNA L-seryl-tRNA(Sec), which will be further converted into selenocysteinyl-tRNA(Sec). This is Serine--tRNA ligase from Staphylococcus aureus (strain bovine RF122 / ET3-1).